The following is a 468-amino-acid chain: Aldehyde dehydrogenase family 3 member B1 (468 aa).

N-acetylmethionine is present on M1. Residue 188–193 coordinates NAD(+); sequence GSPRVG. Active-site residues include E210 and C244. C463 is lipidated: S-palmitoyl cysteine. A Cysteine methyl ester modification is found at C465. Residue C465 is the site of S-geranylgeranyl cysteine attachment. Residues 466–468 constitute a propeptide, removed in mature form; that stretch reads TLL.

It belongs to the aldehyde dehydrogenase family. Post-translationally, dually lipidated in the C-terminus; prenylation occurs prior to, and is a prerequisite for palmitoylation. It is also required for activity towards long-chain substrates. In terms of tissue distribution, highest expression in kidney and lung.

It is found in the cell membrane. It catalyses the reaction an aldehyde + NADP(+) + H2O = a carboxylate + NADPH + 2 H(+). The catalysed reaction is an aldehyde + NAD(+) + H2O = a carboxylate + NADH + 2 H(+). The enzyme catalyses a long-chain fatty aldehyde + NAD(+) + H2O = a long-chain fatty acid + NADH + 2 H(+). It carries out the reaction a medium-chain fatty aldehyde + NAD(+) + H2O = a medium-chain fatty acid + NADH + 2 H(+). It catalyses the reaction octanal + NAD(+) + H2O = octanoate + NADH + 2 H(+). The catalysed reaction is nonanal + NAD(+) + H2O = nonanoate + NADH + 2 H(+). The enzyme catalyses hexadecanoate + NADH + 2 H(+) = hexadecanal + NAD(+) + H2O. It carries out the reaction (2E)-octenal + NAD(+) + H2O = (2E)-octenoate + NADH + 2 H(+). It catalyses the reaction (E)-non-2-enal + NAD(+) + H2O = (E)-non-2-enoate + NADH + 2 H(+). The catalysed reaction is (E)-4-hydroxynon-2-enal + NAD(+) + H2O = (E)-4-hydroxynon-2-enoate + NADH + 2 H(+). The enzyme catalyses (2E)-hexadecenal + NAD(+) + H2O = (E)-hexadec-2-enoate + NADH + 2 H(+). It carries out the reaction benzaldehyde + NAD(+) + H2O = benzoate + NADH + 2 H(+). It catalyses the reaction a medium-chain fatty aldehyde + NADP(+) + H2O = a medium-chain fatty acid + NADPH + 2 H(+). The catalysed reaction is hexanal + NADP(+) + H2O = hexanoate + NADPH + 2 H(+). The enzyme catalyses octanal + NADP(+) + H2O = octanoate + NADPH + 2 H(+). It carries out the reaction nonanal + NADP(+) + H2O = nonanoate + NADPH + 2 H(+). It catalyses the reaction (2E)-octenal + NADP(+) + H2O = (2E)-octenoate + NADPH + 2 H(+). The catalysed reaction is (E)-non-2-enal + NADP(+) + H2O = (E)-non-2-enoate + NADPH + 2 H(+). The enzyme catalyses (E)-4-hydroxynon-2-enal + NADP(+) + H2O = (E)-4-hydroxynon-2-enoate + NADPH + 2 H(+). It carries out the reaction benzaldehyde + NADP(+) + H2O = benzoate + NADPH + 2 H(+). It functions in the pathway alcohol metabolism; ethanol degradation; acetate from ethanol: step 2/2. Functionally, oxidizes medium and long chain saturated and unsaturated fatty aldehydes generated in the plasma membrane into non-toxic fatty acids. May have a protective role against the cytotoxicity induced by lipid peroxidation. Short-chain fatty aldehydes are not good substrates. Can use both NADP(+) and NAD(+) as electron acceptor in vitro, however in vivo preference will depend on their tissue levels. Low activity towards acetaldehyde and 3,4-dihydroxyphenylacetaldehyde. Able to metabolize aromatic aldehydes such as benzaldehyde to their acid form. The polypeptide is Aldehyde dehydrogenase family 3 member B1 (ALDH3B1) (Homo sapiens (Human)).